The sequence spans 344 residues: Adenine deaminase (344 aa).

Zn(2+)-binding residues include H24, H26, and H204. The Proton donor role is filled by E207. D285 is a Zn(2+) binding site. Residue D286 coordinates substrate.

Belongs to the metallo-dependent hydrolases superfamily. Adenosine and AMP deaminases family. Adenine deaminase type 2 subfamily. The cofactor is Zn(2+).

The enzyme catalyses adenine + H2O + H(+) = hypoxanthine + NH4(+). Functionally, catalyzes the hydrolytic deamination of adenine to hypoxanthine. Plays an important role in the purine salvage pathway and in nitrogen catabolism. This chain is Adenine deaminase, found in Caulobacter vibrioides (strain ATCC 19089 / CIP 103742 / CB 15) (Caulobacter crescentus).